The chain runs to 177 residues: Large ribosomal subunit protein bL9 (177 aa).

A disordered region spans residues 151–177; the sequence is EDEEIAEAAPVAEAQAEADGHSTEETA. Over residues 157 to 167 the composition is skewed to low complexity; the sequence is EAAPVAEAQAE. A compositionally biased stretch (basic and acidic residues) spans 168–177; it reads ADGHSTEETA.

This sequence belongs to the bacterial ribosomal protein bL9 family.

In terms of biological role, binds to the 23S rRNA. This is Large ribosomal subunit protein bL9 from Solidesulfovibrio magneticus (strain ATCC 700980 / DSM 13731 / RS-1) (Desulfovibrio magneticus).